The primary structure comprises 525 residues: GMP synthase [glutamine-hydrolyzing] (525 aa).

The region spanning 9-207 (RILILDFGSQ…VVDICKCEKL (199 aa)) is the Glutamine amidotransferase type-1 domain. The Nucleophile role is filled by C86. Catalysis depends on residues H181 and E183. In terms of domain architecture, GMPS ATP-PPase spans 208-400 (WTSASIIDDA…LGLPYDMLYR (193 aa)). Residue 235 to 241 (SGGVDSS) participates in ATP binding.

In terms of assembly, homodimer.

It carries out the reaction XMP + L-glutamine + ATP + H2O = GMP + L-glutamate + AMP + diphosphate + 2 H(+). The protein operates within purine metabolism; GMP biosynthesis; GMP from XMP (L-Gln route): step 1/1. In terms of biological role, catalyzes the synthesis of GMP from XMP. The sequence is that of GMP synthase [glutamine-hydrolyzing] from Colwellia psychrerythraea (strain 34H / ATCC BAA-681) (Vibrio psychroerythus).